We begin with the raw amino-acid sequence, 381 residues long: Homoserine O-succinyltransferase (381 aa).

The AB hydrolase-1 domain maps to 45–360; the sequence is NAVLVCHALN…PHGHDAFLLD (316 aa). Catalysis depends on S151, which acts as the Nucleophile. R221 is a binding site for substrate. Catalysis depends on residues D321 and H354. D355 serves as a coordination point for substrate.

Belongs to the AB hydrolase superfamily. MetX family. In terms of assembly, homodimer.

Its subcellular location is the cytoplasm. The catalysed reaction is L-homoserine + succinyl-CoA = O-succinyl-L-homoserine + CoA. It participates in amino-acid biosynthesis; L-methionine biosynthesis via de novo pathway; O-succinyl-L-homoserine from L-homoserine: step 1/1. In terms of biological role, transfers a succinyl group from succinyl-CoA to L-homoserine, forming succinyl-L-homoserine. This chain is Homoserine O-succinyltransferase, found in Burkholderia lata (strain ATCC 17760 / DSM 23089 / LMG 22485 / NCIMB 9086 / R18194 / 383).